We begin with the raw amino-acid sequence, 177 residues long: Nicotinamide-nucleotide adenylyltransferase (177 aa).

The protein belongs to the archaeal NMN adenylyltransferase family.

The protein localises to the cytoplasm. The catalysed reaction is beta-nicotinamide D-ribonucleotide + ATP + H(+) = diphosphate + NAD(+). It participates in cofactor biosynthesis; NAD(+) biosynthesis; NAD(+) from nicotinamide D-ribonucleotide: step 1/1. This chain is Nicotinamide-nucleotide adenylyltransferase, found in Halobacterium salinarum (strain ATCC 29341 / DSM 671 / R1).